The sequence spans 87 residues: Spermatid-specific protein S1 (87 aa).

Residues 1 to 36 (TKSRYRNRRSRPRRRYGRRMRKTRCRRKGRRISRRP) are disordered.

Its subcellular location is the nucleus. The protein resides in the chromosome. Its function is as follows. Involved in nuclear basic protein transition: histones are replaced by spermatid specific proteins which are themselves replaced by protamines in late spermatids. This is Spermatid-specific protein S1 from Scyliorhinus canicula (Small-spotted catshark).